A 421-amino-acid chain; its full sequence is Conjugal transfer protein TraB (421 aa).

A run of 8 helical transmembrane segments spans residues 33-53, 103-123, 144-164, 169-189, 193-213, 287-307, 366-386, and 388-408; these read LLILLSIAVGAVGWSGEALLL, LLLWLAASAGFVAVHAAFWPA, LAAAVLMGLPPFGITGWAHPL, ILFPGFGWWGLGATTAGLAMM, YWPAAAIALGGFWFWSAATWT, TVIAGAAVIDPGGYDNVMVTV, LIVWPILHSMLFSPAAIVATG, and GWWTEGTSIVAIQQAGVIAWA. The CN hydrolase domain maps to 222–421; sequence KGVDLEQGQT…GRPVVTAFNT (200 aa).

The protein localises to the cell membrane. In terms of biological role, enhances conjugal transfer of the Ti plasmid. In Agrobacterium fabrum (strain C58 / ATCC 33970) (Agrobacterium tumefaciens (strain C58)), this protein is Conjugal transfer protein TraB (traB).